The primary structure comprises 188 residues: Peptidyl-tRNA hydrolase (188 aa).

Tyr17 provides a ligand contact to tRNA. His22 acts as the Proton acceptor in catalysis. TRNA contacts are provided by Tyr65, Asn67, and Asn113.

It belongs to the PTH family. As to quaternary structure, monomer.

The protein resides in the cytoplasm. It carries out the reaction an N-acyl-L-alpha-aminoacyl-tRNA + H2O = an N-acyl-L-amino acid + a tRNA + H(+). Its function is as follows. Hydrolyzes ribosome-free peptidyl-tRNAs (with 1 or more amino acids incorporated), which drop off the ribosome during protein synthesis, or as a result of ribosome stalling. Catalyzes the release of premature peptidyl moieties from peptidyl-tRNA molecules trapped in stalled 50S ribosomal subunits, and thus maintains levels of free tRNAs and 50S ribosomes. In Mycoplasma pneumoniae (strain ATCC 29342 / M129 / Subtype 1) (Mycoplasmoides pneumoniae), this protein is Peptidyl-tRNA hydrolase.